The primary structure comprises 332 residues: Glyceraldehyde-3-phosphate dehydrogenase (332 aa).

NAD(+)-binding positions include 10–11 (RI), D32, and M77. D-glyceraldehyde 3-phosphate-binding positions include 148 to 150 (SCT), T179, 208 to 209 (TG), and R231. C149 serves as the catalytic Nucleophile. Residue N313 participates in NAD(+) binding.

Belongs to the glyceraldehyde-3-phosphate dehydrogenase family. In terms of assembly, homotetramer.

The protein localises to the cytoplasm. It catalyses the reaction D-glyceraldehyde 3-phosphate + phosphate + NAD(+) = (2R)-3-phospho-glyceroyl phosphate + NADH + H(+). The protein operates within carbohydrate degradation; glycolysis; pyruvate from D-glyceraldehyde 3-phosphate: step 1/5. This chain is Glyceraldehyde-3-phosphate dehydrogenase (GPDA), found in Phytophthora infestans (Potato late blight agent).